Here is a 40-residue protein sequence, read N- to C-terminus: SDSKIGDGCFGLPLDHIGSVSGLGCNRPVQNRPKQIPGGS.

Cys9 and Cys25 are oxidised to a cystine. Positions 36-40 (IPGGS) are excised as a propeptide.

Belongs to the natriuretic peptide family. In terms of tissue distribution, expressed by the venom gland.

Its subcellular location is the secreted. Snake venom natriuretic peptide that targets both NPR1 and NPR2. Exhibits hypotensive and vasodepressor activities. The sequence is that of Natriuretic peptide PaNP-b from Pseudechis australis (Mulga snake).